The chain runs to 312 residues: Porphobilinogen deaminase (312 aa).

The residue at position 241 (C241) is an S-(dipyrrolylmethanemethyl)cysteine.

Belongs to the HMBS family. In terms of assembly, monomer. Requires dipyrromethane as cofactor.

The catalysed reaction is 4 porphobilinogen + H2O = hydroxymethylbilane + 4 NH4(+). The protein operates within porphyrin-containing compound metabolism; protoporphyrin-IX biosynthesis; coproporphyrinogen-III from 5-aminolevulinate: step 2/4. Tetrapolymerization of the monopyrrole PBG into the hydroxymethylbilane pre-uroporphyrinogen in several discrete steps. The sequence is that of Porphobilinogen deaminase from Trichlorobacter lovleyi (strain ATCC BAA-1151 / DSM 17278 / SZ) (Geobacter lovleyi).